Consider the following 198-residue polypeptide: Imidazoleglycerol-phosphate dehydratase (198 aa).

The protein belongs to the imidazoleglycerol-phosphate dehydratase family.

The protein resides in the cytoplasm. The catalysed reaction is D-erythro-1-(imidazol-4-yl)glycerol 3-phosphate = 3-(imidazol-4-yl)-2-oxopropyl phosphate + H2O. Its pathway is amino-acid biosynthesis; L-histidine biosynthesis; L-histidine from 5-phospho-alpha-D-ribose 1-diphosphate: step 6/9. This is Imidazoleglycerol-phosphate dehydratase from Nitratidesulfovibrio vulgaris (strain DP4) (Desulfovibrio vulgaris).